A 525-amino-acid chain; its full sequence is Retinoblastoma-binding-like protein E (525 aa).

5 WD repeats span residues 25–66 (PKNI…IVRT), 69–108 (HHTG…ILYS), 222–261 (SSNT…LYQQ), 267–312 (DSVN…KDLE), and 313–352 (GPKE…NWSS). Disordered regions lie at residues 371 to 398 (DEFD…RNPY) and 462 to 525 (EKYQ…KKRK). Residues 383 to 392 (QEVNNNNNNN) are compositionally biased toward low complexity. Positions 462-471 (EKYQKDKEDS) are enriched in basic and acidic residues. The span at 472–500 (SSTTSNSTISSSSSPSPSSSSTTTTTTTS) shows a compositional bias: low complexity. A compositionally biased stretch (basic and acidic residues) spans 501-525 (QKKDETQKKEKSTKKERNSDSKKRK).

It localises to the nucleus. Its function is as follows. Involved in mono-, di- and trimethylation at 'Lys-4' of histone H3. Histone H3 'Lys-4' methylation represents a specific tag for epigenetic transcriptional activation. In Dictyostelium discoideum (Social amoeba), this protein is Retinoblastoma-binding-like protein E.